The sequence spans 147 residues: Ras-related protein RabK2 (147 aa).

GTP is bound by residues Asn-11 to Ser-15 and Thr-63 to Asp-66. The S-geranylgeranyl cysteine moiety is linked to residue Cys-145.

It belongs to the small GTPase superfamily. Rab family.

The protein resides in the cell membrane. This chain is Ras-related protein RabK2 (rabK2), found in Dictyostelium discoideum (Social amoeba).